The chain runs to 28 residues: N-acetyl-D-galactosamine-binding lectin subunit A (28 aa).

This sequence belongs to the ribosome-inactivating protein family. Disulfide-linked heterodimer of A and B chains.

It catalyses the reaction Endohydrolysis of the N-glycosidic bond at one specific adenosine on the 28S rRNA.. Functionally, gal / GalNAc-specific lectin. Agglutinates both native and trypsin-treated rabbit erythrocytes but not human erythrocytes irrespective of blood group type. The chain is N-acetyl-D-galactosamine-binding lectin subunit A from Iris hollandica (Dutch iris).